A 749-amino-acid chain; its full sequence is Disintegrin and metalloproteinase domain-containing protein 10 (749 aa).

An N-terminal signal peptide occupies residues 1 to 18 (MVLPTVLILLLSWAAGLG). A propeptide spanning residues 19–214 (GQYGNPLNKY…MGPELLRKKR (196 aa)) is cleaved from the precursor. A Cysteine switch motif is present at residues 171 to 178 (GGCADHSV). Residue Cys-173 participates in Zn(2+) binding. At 215 to 673 (TTLAERNTCQ…SPQLYENIAE (459 aa)) the chain is on the extracellular side. Residues 221-457 (NTCQLYIQTD…KRNNCFVESG (237 aa)) enclose the Peptidase M12B domain. 17 disulfide bridges follow: Cys-223/Cys-314, Cys-345/Cys-452, Cys-400/Cys-436, Cys-461/Cys-496, Cys-472/Cys-485, Cys-474/Cys-480, Cys-484/Cys-516, Cys-504/Cys-512, Cys-511/Cys-537, Cys-525/Cys-544, Cys-531/Cys-563, Cys-556/Cys-568, Cys-573/Cys-599, Cys-581/Cys-608, Cys-583/Cys-598, Cys-595/Cys-640, and Cys-633/Cys-646. Asn-268 and Asn-279 each carry an N-linked (GlcNAc...) asparagine glycan. Residue His-384 coordinates Zn(2+). Glu-385 is an active-site residue. Residues His-388 and His-394 each contribute to the Zn(2+) site. An N-linked (GlcNAc...) asparagine glycan is attached at Asn-440. The 95-residue stretch at 458–552 (QPICGNGMVE…LCPASDPKPN (95 aa)) folds into the Disintegrin domain. N-linked (GlcNAc...) asparagine glycosylation is present at Asn-552. Residues 674-697 (WIVAHWWAVLLMGIALIMLMAGFI) traverse the membrane as a helical segment. Residues 698–749 (KICSVHTPSSNPKLPPPKPLPGTLKRRRPPQPIQQPPRQRPRESYQMGHMRR) lie on the Cytoplasmic side of the membrane. Residues 705-749 (PSSNPKLPPPKPLPGTLKRRRPPQPIQQPPRQRPRESYQMGHMRR) form a disordered region. Positions 709 to 716 (PKLPPPKP) match the SH3-binding motif. At Thr-720 the chain carries Phosphothreonine. The SH3-binding motif lies at 723-729 (RRRPPQP). Residues 735–749 (RQRPRESYQMGHMRR) are interaction with AP2A1, AP2A2 and AP2M1.

In terms of assembly, forms a ternary EFNA5-EPHA3-ADAM10 complex mediating EFNA5 extracellular domain shedding by ADAM10 which regulates the EFNA5-EPHA3 complex internalization and function, the cleavage occurs in trans, with ADAM10 and its substrate being on the membranes of opposing cells. Interacts with the clathrin adapter AP2 complex subunits AP2A1, AP2A2, AP2B1, and AP2M1; this interaction facilitates ADAM10 endocytosis from the plasma membrane during long-term potentiation in hippocampal neurons. Forms a ternary complex composed of ADAM10, EPHA4 and CADH1; within the complex, ADAM10 cleaves CADH1 which disrupts adherens junctions. Interacts with EPHA2. Interacts with NGF in a divalent cation-dependent manner. Interacts with TSPAN14; the interaction promotes ADAM10 maturation and cell surface expression. Interacts with TSPAN5, TSPAN10, TSPAN14, TSPAN15, TSPAN17 and TSPAN33; these interactions regulate ADAM10 substrate specificity, endocytosis and turnover. Interacts (via extracellular domain) with TSPAN33 (via extracellular domain) and (via cytoplasmic domain) with AFDN; interaction with TSPAN33 allows the docking of ADAM10 to zonula adherens through a PDZ11-dependent interaction between TSPAN33 and PLEKHA7 while interaction with AFDN locks ADAM10 at zonula adherens. Interacts with DLG1; this interaction recruits ADAM10 to the cell membrane during long-term depression in hippocampal neurons. Interacts (via extracellular domain) with BACE1 (via extracellular domain). Interacts with FAM171A1. Requires Zn(2+) as cofactor. Post-translationally, the precursor is cleaved by furin and PCSK7. Expressed in brain, kidney, lung, spleen, ovary and testis.

The protein resides in the cell membrane. The protein localises to the golgi apparatus membrane. It is found in the cytoplasmic vesicle. Its subcellular location is the clathrin-coated vesicle. It localises to the cell projection. The protein resides in the axon. The protein localises to the dendrite. It is found in the cell junction. Its subcellular location is the adherens junction. It localises to the cytoplasm. It carries out the reaction Endopeptidase of broad specificity.. Its activity is regulated as follows. Catalytically inactive when the propeptide is intact and associated with the mature enzyme. The disintegrin and cysteine-rich regions modulate access of substrates to exerts an inhibitory effect on the cleavage of ADAM10 substrates. In terms of biological role, transmembrane metalloprotease which mediates the ectodomain shedding of a myriad of transmembrane proteins, including adhesion proteins, growth factor precursors and cytokines being essential for development and tissue homeostasis. Associates with six members of the tetraspanin superfamily TspanC8 which regulate its exit from the endoplasmic reticulum and its substrate selectivity. Cleaves the membrane-bound precursor of TNF-alpha at '76-Ala-|-Val-77' to its mature soluble form. Responsible for the proteolytical release of soluble JAM3 from endothelial cells surface. Responsible for the proteolytic release of several other cell-surface proteins, including heparin-binding epidermal growth-like factor, ephrin-A2, CD44, CDH2 and for constitutive and regulated alpha-secretase cleavage of amyloid precursor protein (APP). Contributes to the normal cleavage of the cellular prion protein. Involved in the cleavage of the adhesion molecule L1 at the cell surface and in released membrane vesicles, suggesting a vesicle-based protease activity. Also controls the proteolytic processing of Notch and mediates lateral inhibition during neurogenesis. Required for the development of type 1 transitional B cells into marginal zone B cells, probably by cleaving Notch. Responsible for the FasL ectodomain shedding and for the generation of the remnant ADAM10-processed FasL (FasL APL) transmembrane form. Also cleaves the ectodomain of the integral membrane proteins CORIN and ITM2B. Mediates the proteolytic cleavage of LAG3, leading to release the secreted form of LAG3. Mediates the proteolytic cleavage of IL6R and IL11RA, leading to the release of secreted forms of IL6R and IL11RA. Enhances the cleavage of CHL1 by BACE1. Cleaves NRCAM. Cleaves TREM2, resulting in shedding of the TREM2 ectodomain. Involved in the development and maturation of glomerular and coronary vasculature. During development of the cochlear organ of Corti, promotes pillar cell separation by forming a ternary complex with CADH1 and EPHA4 and cleaving CADH1 at adherens junctions. May regulate the EFNA5-EPHA3 signaling. Regulates leukocyte transmigration as a sheddase for the adherens junction protein VE-cadherin/CDH5 in endothelial cells. This chain is Disintegrin and metalloproteinase domain-containing protein 10 (Adam10), found in Rattus norvegicus (Rat).